Consider the following 169-residue polypeptide: Protein Flattop homolog (169 aa).

The interval 53-169 (IPRSSRSPWG…SPKLATPEPC (117 aa)) is disordered. Residues 119–130 (VQASPRNASPLQ) show a composition bias toward polar residues.

Belongs to the Flattop family.

It is found in the cytoplasm. It localises to the cytoskeleton. Its subcellular location is the cilium basal body. The protein localises to the cell projection. The protein resides in the cilium. It is found in the apical cell membrane. Acts as a regulator of cilium basal body docking and positioning in mono- and multiciliated cells. The polypeptide is Protein Flattop homolog (Nematostella vectensis (Starlet sea anemone)).